The primary structure comprises 127 residues: Aspartate 1-decarboxylase (127 aa).

Residue Ser25 is the Schiff-base intermediate with substrate; via pyruvic acid of the active site. The residue at position 25 (Ser25) is a Pyruvic acid (Ser). Thr57 serves as a coordination point for substrate. Tyr58 acts as the Proton donor in catalysis. 73–75 (GAA) contacts substrate.

Belongs to the PanD family. As to quaternary structure, heterooctamer of four alpha and four beta subunits. Requires pyruvate as cofactor. Post-translationally, is synthesized initially as an inactive proenzyme, which is activated by self-cleavage at a specific serine bond to produce a beta-subunit with a hydroxyl group at its C-terminus and an alpha-subunit with a pyruvoyl group at its N-terminus.

The protein resides in the cytoplasm. The catalysed reaction is L-aspartate + H(+) = beta-alanine + CO2. The protein operates within cofactor biosynthesis; (R)-pantothenate biosynthesis; beta-alanine from L-aspartate: step 1/1. Catalyzes the pyruvoyl-dependent decarboxylation of aspartate to produce beta-alanine. This Bacillus cytotoxicus (strain DSM 22905 / CIP 110041 / 391-98 / NVH 391-98) protein is Aspartate 1-decarboxylase.